The chain runs to 205 residues: Large ribosomal subunit protein uL4 (205 aa).

Residues 56–78 (VSGTTAKPYRQKHTGRARQGSLR) are disordered.

The protein belongs to the universal ribosomal protein uL4 family. In terms of assembly, part of the 50S ribosomal subunit.

In terms of biological role, one of the primary rRNA binding proteins, this protein initially binds near the 5'-end of the 23S rRNA. It is important during the early stages of 50S assembly. It makes multiple contacts with different domains of the 23S rRNA in the assembled 50S subunit and ribosome. Its function is as follows. Forms part of the polypeptide exit tunnel. This chain is Large ribosomal subunit protein uL4, found in Ehrlichia ruminantium (strain Gardel).